The primary structure comprises 264 residues: Phosphonoacetaldehyde hydrolase (264 aa).

The active-site Nucleophile is Asp10. Mg(2+)-binding residues include Asp10 and Ala12. The active-site Schiff-base intermediate with substrate is the Lys52. Asp185 contributes to the Mg(2+) binding site.

It belongs to the HAD-like hydrolase superfamily. PhnX family. In terms of assembly, homodimer. It depends on Mg(2+) as a cofactor.

The enzyme catalyses phosphonoacetaldehyde + H2O = acetaldehyde + phosphate + H(+). In terms of biological role, involved in phosphonate degradation. The polypeptide is Phosphonoacetaldehyde hydrolase (Parabacteroides distasonis (strain ATCC 8503 / DSM 20701 / CIP 104284 / JCM 5825 / NCTC 11152)).